A 1413-amino-acid polypeptide reads, in one-letter code: MRHGVAWALLVAAALGLGARGVRGAVALADFYPFGAERGDAVTPKQDDGGSGLRPLSVPFPFFGAEHSGLYVNNNGIISFLKEVSQFTPVAFPIAKDRCVVAAFWADVDNRRAGDVYYREATDPAMLRRATEDVRHYFPELLDFNATWVFVATWYRVTFFGGSSSSPVNTFQTVLITDGKLSFTIFNYESIVWTTGTHASSGGNATGLGGIAAQAGFNAGDGQRYFSIPGSRTADMAEVETTTNVGVPGRWAFRIDDAQVRVGGCGHTTSVCLALRPCLNGGKCIDDCVTGNPSYTCSCLSGFTGRRCHLDVNECASQPCQNGGTCTHGINSFRCQCPAGFGGPTCETAQSPCDTKECQHGGQCQVENGSAVCVCQAGYTGAACEMDVDDCSPDPCLNGGSCVDLVGNYTCLCAEPFKGLRCETGDHPVPDACLSAPCHNGGTCVDADQGYVCECPEGFMGLDCRERVPDDCECRNGGRCLGANTTLCQCPLGFFGLLCEFEITAMPCNMNTQCPDGGYCMEHGGSYLCVCHTDHNASHSLPSPCDSDPCFNGGSCDAHDDSYTCECPRGFHGKHCEKARPHLCSSGPCRNGGTCKEAGGEYHCSCPYRFTGRHCEIGKPDSCASGPCHNGGTCFHYIGKYKCDCPPGFSGRHCEIAPSPCFRSPCVNGGTCEDRDTDFFCHCQAGYMGRRCQAEVDCGPPEEVKHATLRFNGTRLGAVALYACDRGYSLSAPSRIRVCQPHGVWSEPPQCLEIDECRSQPCLHGGSCQDRVAGYLCLCSTGYEGAHCELERDECRAHPCRNGGSCRNLPGAYVCRCPAGFVGVHCETEVDACDSSPCQHGGRCESGGGAYLCVCPESFFGYHCETVSDPCFSSPCGGRGYCLASNGSHSCTCKVGYTGEDCAKELFPPTALKMERVEESGVSISWNPPNGPAARQMLDGYAVTYVSSDGSYRRTDFVDRTRSSHQLQALAAGRAYNISVFSVKRNSNNKNDISRPAVLLARTRPRPVEGFEVTNVTASTISVQWALHRIRHATVSGVRVSIRHPEALRDQATDVDRSVDRFTFRALLPGKRYTIQLTTLSGLRGEEHPTESLATAPTHVWTRPLPPANLTAARVTATSAHVVWDAPTPGSLLEAYVINVTTSQSTKSRYVPNGKLASYTVRDLLPGRRYQLSVIAVQSTELGPQHSEPAHLYIITSPRDGADRRWHQGGHHPRVLKNRPPPARLPELRLLNDHSAPETPTQPPRFSELVDGRGRVSARFGGSPSKAATVRSQPTASAQLENMEEAPKRVSLALQLPEHGSKDIGNVPGNCSENPCQNGGTCVPGADAHSCDCGPGFKGRRCELACIKVSRPCTRLFSETKAFPVWEGGVCHHVYKRVYRVHQDICFKESCESTSLKKTPNRKQSKSQTLEKS.

The signal sequence occupies residues 1–24; sequence MRHGVAWALLVAAALGLGARGVRG. One can recognise an NIDO domain in the interval 103–258; it reads AFWADVDNRR…GRWAFRIDDA (156 aa). Asparagine 145 and asparagine 204 each carry an N-linked (GlcNAc...) asparagine glycan. EGF-like domains lie at 268–309, 311–347, and 349–385; these read TTSV…RRCH, DVNE…PTCE, and AQSP…AACE. Intrachain disulfides connect cysteine 272/cysteine 284, cysteine 278/cysteine 297, cysteine 299/cysteine 308, cysteine 315/cysteine 326, cysteine 320/cysteine 335, cysteine 337/cysteine 346, cysteine 353/cysteine 364, cysteine 358/cysteine 373, cysteine 375/cysteine 384, cysteine 391/cysteine 402, cysteine 396/cysteine 411, cysteine 413/cysteine 422, cysteine 433/cysteine 444, cysteine 438/cysteine 453, cysteine 455/cysteine 464, cysteine 472/cysteine 480, cysteine 474/cysteine 488, and cysteine 490/cysteine 499. An N-linked (GlcNAc...) asparagine glycan is attached at asparagine 292. A Follistatin-like 1 domain is found at 352–374; it reads PCDTKECQHGGQCQVENGSAVCV. A glycan (N-linked (GlcNAc...) asparagine) is linked at asparagine 368. The EGF-like 4; calcium-binding domain maps to 387–423; sequence DVDDCSPDPCLNGGSCVDLVGNYTCLCAEPFKGLRCE. A glycan (N-linked (GlcNAc...) asparagine) is linked at asparagine 408. 2 consecutive EGF-like domains span residues 429 to 465 and 468 to 500; these read VPDA…LDCR and VPDD…LLCE. Asparagine 484 carries an N-linked (GlcNAc...) asparagine glycan. The Follistatin-like 2 domain occupies 507–530; it reads PCNMNTQCPDGGYCMEHGGSYLCV. An N-linked (GlcNAc...) asparagine glycan is attached at asparagine 536. EGF-like domains follow at residues 541-577, 580-616, 619-655, and 657-693; these read LPSP…KHCE, RPHL…RHCE, KPDS…RHCE, and APSP…RRCQ. 26 disulfides stabilise this stretch: cysteine 545–cysteine 556, cysteine 550–cysteine 565, cysteine 567–cysteine 576, cysteine 584–cysteine 595, cysteine 589–cysteine 604, cysteine 606–cysteine 615, cysteine 623–cysteine 634, cysteine 628–cysteine 643, cysteine 645–cysteine 654, cysteine 661–cysteine 672, cysteine 666–cysteine 681, cysteine 683–cysteine 692, cysteine 698–cysteine 739, cysteine 724–cysteine 751, cysteine 757–cysteine 768, cysteine 762–cysteine 777, cysteine 779–cysteine 788, cysteine 795–cysteine 806, cysteine 800–cysteine 815, cysteine 817–cysteine 826, cysteine 833–cysteine 844, cysteine 838–cysteine 853, cysteine 855–cysteine 864, cysteine 871–cysteine 882, cysteine 876–cysteine 891, and cysteine 893–cysteine 902. A Sushi domain is found at 696–753; that stretch reads VDCGPPEEVKHATLRFNGTRLGAVALYACDRGYSLSAPSRIRVCQPHGVWSEPPQCLE. A glycan (N-linked (GlcNAc...) asparagine) is linked at asparagine 712. The EGF-like 11; calcium-binding domain occupies 753–789; sequence EIDECRSQPCLHGGSCQDRVAGYLCLCSTGYEGAHCE. An EGF-like 12; calcium-binding domain is found at 791–827; sequence ERDECRAHPCRNGGSCRNLPGAYVCRCPAGFVGVHCE. 2 consecutive EGF-like domains span residues 829–865 and 867–903; these read EVDA…YHCE and VSDP…EDCA. Residue asparagine 886 is glycosylated (N-linked (GlcNAc...) asparagine). 3 Fibronectin type-III domains span residues 908–1006, 1007–1105, and 1106–1200; these read PPTA…TRPR, PVEG…TRPL, and PPAN…SPRD. N-linked (GlcNAc...) asparagine glycosylation is found at asparagine 977, asparagine 1015, asparagine 1109, and asparagine 1139. The tract at residues 1206-1226 is disordered; that stretch reads WHQGGHHPRVLKNRPPPARLP. Positions 1207 to 1217 are enriched in basic residues; that stretch reads HQGGHHPRVLK. Residues 1307–1343 enclose the EGF-like 15 domain; sequence VPGNCSENPCQNGGTCVPGADAHSCDCGPGFKGRRCE. Asparagine 1310 carries an N-linked (GlcNAc...) asparagine glycan. 3 cysteine pairs are disulfide-bonded: cysteine 1311–cysteine 1322, cysteine 1316–cysteine 1331, and cysteine 1333–cysteine 1342. The segment at 1394–1413 is disordered; it reads TSLKKTPNRKQSKSQTLEKS.

In terms of processing, phosphorylated on serine and threonine residues. N-glycosylated.

The protein localises to the secreted. It is found in the extracellular space. Its subcellular location is the extracellular matrix. The protein is Sushi, nidogen and EGF-like domain-containing protein 1 of Homo sapiens (Human).